Here is a 150-residue protein sequence, read N- to C-terminus: Deoxyuridine 5'-triphosphate nucleotidohydrolase (150 aa).

Residues 69-71 (RSG), Asn-82, and 86-88 (LID) contribute to the substrate site.

The protein belongs to the dUTPase family. Requires Mg(2+) as cofactor.

It catalyses the reaction dUTP + H2O = dUMP + diphosphate + H(+). It participates in pyrimidine metabolism; dUMP biosynthesis; dUMP from dCTP (dUTP route): step 2/2. This enzyme is involved in nucleotide metabolism: it produces dUMP, the immediate precursor of thymidine nucleotides and it decreases the intracellular concentration of dUTP so that uracil cannot be incorporated into DNA. In Methylobacillus flagellatus (strain ATCC 51484 / DSM 6875 / VKM B-1610 / KT), this protein is Deoxyuridine 5'-triphosphate nucleotidohydrolase.